The primary structure comprises 472 residues: Methylenetetrahydrofolate--tRNA-(uracil-5-)-methyltransferase TrmFO (472 aa).

10 to 15 (GGGLAG) contributes to the FAD binding site.

It belongs to the MnmG family. TrmFO subfamily. Requires FAD as cofactor.

Its subcellular location is the cytoplasm. The catalysed reaction is uridine(54) in tRNA + (6R)-5,10-methylene-5,6,7,8-tetrahydrofolate + NADH + H(+) = 5-methyluridine(54) in tRNA + (6S)-5,6,7,8-tetrahydrofolate + NAD(+). It catalyses the reaction uridine(54) in tRNA + (6R)-5,10-methylene-5,6,7,8-tetrahydrofolate + NADPH + H(+) = 5-methyluridine(54) in tRNA + (6S)-5,6,7,8-tetrahydrofolate + NADP(+). Functionally, catalyzes the folate-dependent formation of 5-methyl-uridine at position 54 (M-5-U54) in all tRNAs. In Mesorhizobium japonicum (strain LMG 29417 / CECT 9101 / MAFF 303099) (Mesorhizobium loti (strain MAFF 303099)), this protein is Methylenetetrahydrofolate--tRNA-(uracil-5-)-methyltransferase TrmFO.